The primary structure comprises 202 residues: Odorant-binding protein 59a (202 aa).

Positions 1–20 (MKQLIFLLICLSCGTCSIYA) are cleaved as a signal peptide. Positions 43-53 (HRQDEDEDRGR) are enriched in basic and acidic residues. Residues 43 to 105 (HRQDEDEDRG…QSDGRNHTSN (63 aa)) form a disordered region. Positions 54–65 (GGQGRQGNGYEY) are enriched in gly residues.

The protein belongs to the PBP/GOBP family. As to expression, expressed in non-neuronal cells in hygrosensitive sensilla in the second chamber of the sacculus of the antenna third segment (at protein level).

It is found in the secreted. Odorant-binding protein required for hygrotaxis behavior in humidity-detecting sensilla. In Drosophila melanogaster (Fruit fly), this protein is Odorant-binding protein 59a.